A 189-amino-acid chain; its full sequence is MTIKSDKWIRRMAESHKMIEPFAPDQVRVSEDGRKIVSYGTSSYGYDIRCADEFKIFTNINSTIVDPKNFDEKSFVDFKGDVCIIPPNSFALARTVEYFRIPRSVLTVCLGKSTYARCGIIVNVTPFEPEWEGHVTLEFSNTTPLPAKIYANEGVAQVLFFESDEICETSYADRGGKYQGQHGVTLPRT.

Residues 112-117, 136-138, Gln-157, Tyr-171, and Gln-181 each bind dCTP; these read KSTYAR and TLE. Glu-138 functions as the Proton donor/acceptor in the catalytic mechanism.

The protein belongs to the dCTP deaminase family. As to quaternary structure, homotrimer.

The enzyme catalyses dCTP + H2O + H(+) = dUTP + NH4(+). It participates in pyrimidine metabolism; dUMP biosynthesis; dUMP from dCTP (dUTP route): step 1/2. Its function is as follows. Catalyzes the deamination of dCTP to dUTP. This Paraburkholderia xenovorans (strain LB400) protein is dCTP deaminase.